The following is a 633-amino-acid chain: Chaperone protein DnaK (633 aa).

Threonine 196 is modified (phosphothreonine; by autocatalysis). The disordered stretch occupies residues 594–633; it reads NLYGQPGAEPQPETNGHAGGSKGGDGAVNAEYEVIDGDDK. Positions 610–619 are enriched in gly residues; the sequence is HAGGSKGGDG.

It belongs to the heat shock protein 70 family.

In terms of biological role, acts as a chaperone. The polypeptide is Chaperone protein DnaK (Chlorobaculum tepidum (strain ATCC 49652 / DSM 12025 / NBRC 103806 / TLS) (Chlorobium tepidum)).